Here is an 870-residue protein sequence, read N- to C-terminus: Dynamin-2 (870 aa).

The 267-residue stretch at 28–294 (HLDLPQIAVV…LTNHIRESLP (267 aa)) folds into the Dynamin-type G domain. The interval 38–45 (GGQSAGKS) is G1 motif. Residues Ser41, Gly43, Lys44, Ser45, Ser46, Arg59, and Gly60 each contribute to the GDP site. The tract at residues 64 to 66 (VTR) is G2 motif. Positions 136–139 (DLPG) are G3 motif. The segment at 205-208 (TKLD) is G4 motif. 3 residues coordinate GDP: Lys206, Asp208, and Asp211. At Tyr231 the chain carries Phosphotyrosine. The segment at 235-238 (VNRS) is G5 motif. GDP contacts are provided by Asn236, Arg237, and Gln239. Lys299 carries the post-translational modification N6-acetyllysine. Residues 519–625 (LVIRRGWLTI…WKASFLRAGV (107 aa)) form the PH domain. Phosphotyrosine is present on Tyr597. Residue Lys598 is modified to N6-acetyllysine. Residues 653–744 (VETIRNLVDS…IIGDISTSTV (92 aa)) form the GED domain. Residues 741-870 (TSTVSTPVPP…IRPAEPSLLD (130 aa)) are disordered. Thr755 carries the post-translational modification Phosphothreonine. Residues 756 to 767 (WLQNTSSHSPTP) show a composition bias toward polar residues. Ser764 is modified (phosphoserine; by CDK1). The span at 826 to 846 (SAPPQIPSRPARIPPGIPPGV) shows a compositional bias: pro residues. The span at 847-864 (PSRRAPAAPSRPTIIRPA) shows a compositional bias: low complexity.

Belongs to the TRAFAC class dynamin-like GTPase superfamily. Dynamin/Fzo/YdjA family. In terms of assembly, oligomerizes into a helical polymer that self-assembles around the vesicle membrane, when associated to the menbrane through lipid binding. Interacts with SHANK1 and SHANK2. Interacts with SNX9. Interacts (via C-terminal proline-rich domain (PRD)) with SNX18 (via SH3 domain); this interaction regulates ATG9A and ATG16L1 trafficking from recycling endosomes to sites of autophagosome formation. Interacts with SNX33 (via SH3 domain). Interacts with PSTPIP1 (via SH3 domain). Interacts with CTNND2. Interacts (via C-terminal proline-rich domain (PRD)) with BIN1 (via SH3 domain); this interaction allows the recruitment of DNM2 to the membrane tubules and inhibits self-assembly-stimulated GTPase activity on the membrane. Interacts with GABARAP, GABARAPL1 and GABARAPL2. Interacts with MAP1LC3B (the lipidate and non-lipidated LC3 form); this interaction mediates recycling endosome scission leading to autophagosome release. Interacts with ITSN1. Interacts with MYOF. May interact with PIK3C3. May be a component of a complex composed of RAB5A (in GDP-bound form), DYN2 and PIK3C3. Interacts with SDC4; this interaction is markedly enhanced at focal ahesion site upon induction of focal adhesions and stress-fiber formation. Interacts with ACTN1. Interacts with CTTN; this interaction stimulates the intrinsic GTPase activity of DNM2 and stabilizes the association of DNM2 and actin filaments; in addition this interaction is stimulated by ligand binding to the receptor, leading to the recruitment of the DNM2-CTTN complex to the sequestered receptor-ligand complex to its internalization. Interacts with NOSTRIN (via SH3 domain); this interaction allows the recruitment of NOS3 to dynamin-positive structures. Interacts (via C-terminal proline-rich domain (PRD)) with SH3BP4 (via SH3 domain); this interaction controls the GTPase activity and is prevented by EGFR-induced tyrosine phosphorylation of either DNM2 or SH3BP4. Interacts with MYO1E (via SH3 domain). Interacts with TUBG1; this interaction may participate in centrosome cohesion. In terms of processing, phosphorylation at Ser-848 by GSK3-alpha relieves the inhibition of BIN1 and promotes endocytosis. Phosphorylation at Ser-764 by CDK1 is greatly increased upon mitotic entry. It regulates cytokinesis downstream of calcineurin, and does not affect clathrin-mediated endocytosis. Dephosphorylated by calcineurin/PP2 during cytokinesis in a Ca(2+)- and calmodulin-dependent manner. Phosphorylated on tyrosine residues by EGFR. Phosphorylated on tyrosine residues after activation of SRC. Ubiquitously expressed. Brain expression is restricted to glial cells and fibroblasts. Highest levels in the testis.

It localises to the cytoplasm. Its subcellular location is the cytoskeleton. The protein resides in the cytoplasmic vesicle. The protein localises to the clathrin-coated vesicle. It is found in the cell projection. It localises to the uropodium. Its subcellular location is the endosome. The protein resides in the microtubule organizing center. The protein localises to the centrosome. It is found in the centriole. It localises to the recycling endosome. Its subcellular location is the phagocytic cup. The protein resides in the phagosome membrane. The protein localises to the podosome. It is found in the cell junction. It localises to the postsynaptic density. Its subcellular location is the synapse. The protein resides in the synaptosome. The protein localises to the midbody. It is found in the membrane. It localises to the clathrin-coated pit. Its subcellular location is the cell membrane. The catalysed reaction is GTP + H2O = GDP + phosphate + H(+). Catalyzes the hydrolysis of GTP and utilizes this energy to mediate vesicle scission at plasma membrane during endocytosis and filament remodeling at many actin structures during organization of the actin cytoskeleton. Plays an important role in vesicular trafficking processes, namely clathrin-mediated endocytosis (CME), exocytic and clathrin-coated vesicle from the trans-Golgi network, and PDGF stimulated macropinocytosis. During vesicular trafficking process, associates to the membrane, through lipid binding, and self-assembles into ring-like structure through oligomerization to form a helical polymer around the vesicle membrane and leading to vesicle scission. Plays a role in organization of the actin cytoskeleton by mediating arrangement of stress fibers and actin bundles in podocytes. During organization of the actin cytoskeleton, self-assembles into ring-like structure that directly bundles actin filaments to form typical membrane tubules decorated with dynamin spiral polymers. Self-assembly increases GTPase activity and the GTP hydrolysis causes the rapid depolymerization of dynamin spiral polymers, and results in dispersion of actin bundles. Remodels, through its interaction with CTTN, bundled actin filaments in a GTPase-dependent manner and plays a role in orchestrating the global actomyosin cytoskeleton. The interaction with CTTN stabilizes the interaction of DNM2 and actin filaments and stimulates the intrinsic GTPase activity that results in actin filament-barbed ends and increases the sensitivity of filaments in bundles to the actin depolymerizing factor, CFL1. Plays a role in the autophagy process, by participating in the formation of ATG9A vesicles destined for the autophagosomes through its interaction with SNX18, by mediating recycling endosome scission leading to autophagosome release through MAP1LC3B interaction and by regulating maturation of apoptotic cell corpse-containing phagosomes by recruiting PIK3C3 to the phagosome membrane. Also plays a role in cytokinesis. May participate in centrosome cohesion through its interaction with TUBG1. Plays a role in the regulation of neuron morphology, axon growth and formation of neuronal growth cones. Involved in membrane tubulation. The sequence is that of Dynamin-2 from Rattus norvegicus (Rat).